A 232-amino-acid polypeptide reads, in one-letter code: tRNA pseudouridine synthase B (232 aa).

Asp53 serves as the catalytic Nucleophile.

It belongs to the pseudouridine synthase TruB family. Type 1 subfamily.

It catalyses the reaction uridine(55) in tRNA = pseudouridine(55) in tRNA. In terms of biological role, responsible for synthesis of pseudouridine from uracil-55 in the psi GC loop of transfer RNAs. This is tRNA pseudouridine synthase B from Malacoplasma penetrans (strain HF-2) (Mycoplasma penetrans).